A 689-amino-acid chain; its full sequence is MNFENLLIELGTEELPPKSLRKLAESFLANFTEELTKADLAFSSAVWYAAPRRLAINVTELALAQADKIVEKRGPAVSSAFDAEGKPTKAAEGWARGNGITVEQAERLVTDKGEWLVHNAKVEGVETKSLIAAMAQRALDKLPIPKPMRWGNNKTQFIRPVHTATILLGSELIEGELLGIKSARTVRGHRFMGLKQFELAHADHYLADLKEKGKVIADYESRKALIKADAEKAAAKIGGTADIEDSLLEEVASLVEWPVVLTASFEEKFLSVPSEALVYTMKGDQKYFPVFDDAGKLLPNFIFVANIESKDPAQIISGNEKVVRPRLADAEFFFNTDKKHTLESRLPSLETVLFQQQLGTLKDKVNRISALAAFIAEQTGANAVDAARAGLLSKTDLMTNMVMEFTDTQGTMGMHYARLDGETEAVAVAMEEQYKPKFSGDTVPSAGVSCAVALADKLDTLVGIFGIGQAPKGAADPFALRRAAIGVLRIIVENKLPLDLVTLIAKAQELHGTHLSNVNASDEVLEFLMARFRAWYQDKGIGVDVILAVLARRPTRPADFDSRINAVSHFRSLEASGALAAANKRVSNILAKVEGALPTTIDASLLTEAAEQALAAKLNELQPQLAPLFANADYQQALTLLAGLRESVDQFFEDVMVMADDEALKNNRLALLNNLREQFLHVADISLLQ.

It belongs to the class-II aminoacyl-tRNA synthetase family. In terms of assembly, tetramer of two alpha and two beta subunits.

Its subcellular location is the cytoplasm. It catalyses the reaction tRNA(Gly) + glycine + ATP = glycyl-tRNA(Gly) + AMP + diphosphate. This Shewanella sp. (strain W3-18-1) protein is Glycine--tRNA ligase beta subunit.